Reading from the N-terminus, the 480-residue chain is Uridine 5'-monophosphate synthase (480 aa).

Ala-2 bears the N-acetylalanine mark. Residues 2–214 (AVARAALGPL…VFVAANHNGS (213 aa)) form an OPRTase region. Tyr-37 carries the phosphotyrosine modification. Position 214 is a phosphoserine (Ser-214). The segment at 215–220 (PLSIKE) is domain linker. The tract at residues 221–480 (APKELSFGAR…WEAYLSRLGV (260 aa)) is OMPdecase. Ser-257 provides a ligand contact to orotidine 5'-phosphate. Residues Ser-257, Asp-259, and 281–283 (KTH) contribute to the UMP site. Position 281 (Lys-281) interacts with orotidine 5'-phosphate. Catalysis depends on for OMPdecase activity residues Asp-312, Lys-314, and Asp-317. Orotidine 5'-phosphate-binding positions include Lys-314, Asp-317, Thr-321, Ser-372, 430–432 (QQY), and 450–451 (GR). UMP is bound by residues Asp-317, Thr-321, Ser-372, 430–432 (QQY), and 450–451 (GR).

In the N-terminal section; belongs to the purine/pyrimidine phosphoribosyltransferase family. It in the C-terminal section; belongs to the OMP decarboxylase family. Homodimer; dimerization is required for enzymatic activity.

The enzyme catalyses orotidine 5'-phosphate + diphosphate = orotate + 5-phospho-alpha-D-ribose 1-diphosphate. The catalysed reaction is orotidine 5'-phosphate + H(+) = UMP + CO2. It participates in pyrimidine metabolism; UMP biosynthesis via de novo pathway; UMP from orotate: step 1/2. Its pathway is pyrimidine metabolism; UMP biosynthesis via de novo pathway; UMP from orotate: step 2/2. Functionally, bifunctional enzyme catalyzing the last two steps of de novo pyrimidine biosynthesis, orotate phosphoribosyltransferase (OPRT), which converts orotate to orotidine-5'-monophosphate (OMP), and orotidine-5'-monophosphate decarboxylase (ODC), the terminal enzymatic reaction that decarboxylates OMP to uridine monophosphate (UMP). This Homo sapiens (Human) protein is Uridine 5'-monophosphate synthase.